Here is a 513-residue protein sequence, read N- to C-terminus: MEMAKEQELILVLDFGSQYNQLITRRIREMGVYSELHDHEISIEEIKKMNPKGIILSGGPNSVYEEGSFTIDPEIYNLGIPVLGICYGMQLTTKLLGGKVERANEREYGKAIINAKSDELFAGLPAEQTVWMSHSDKVIEIPEGFEVIADSPSTDYAAIEDKKRRIYGVQFHPEVRHTEYGNDLLNNFVRRVCECKGQWTMENFIEIEIEKIRQRVGDRRVLCAMSGGVDSSVVAVLLHKAIGDQLTCIFVDHGLLRKGEGDMVMEQFGEGFNMNIIRVNAKDRFMNKLKGVSDPEQKRKIIGNEFVYVFDDEASKLKGVDFLAQGTLYTDVIESGTKTAQTIKSHHNVGGLPEDMEFELIEPINTLFKDEVRKLGIELGIPEHLVWRQPFPGPGLGIRVLGEITEDKLEIVRESDAILRQVIREEGLEREIWQYFTVLPNIQSVGVMGDYRTYDHTVGIRAVTSIDGMTSDFARIDWEVLQKISSRIVNEVDHVNRVVYDITSKPPSTIEWE.

The Glutamine amidotransferase type-1 domain maps to 9-198 (LILVLDFGSQ…VRRVCECKGQ (190 aa)). Cysteine 86 serves as the catalytic Nucleophile. Residues histidine 172 and glutamate 174 contribute to the active site. The GMPS ATP-PPase domain maps to 199 to 388 (WTMENFIEIE…LGIPEHLVWR (190 aa)). 226–232 (SGGVDSS) contributes to the ATP binding site.

Homodimer.

The enzyme catalyses XMP + L-glutamine + ATP + H2O = GMP + L-glutamate + AMP + diphosphate + 2 H(+). It functions in the pathway purine metabolism; GMP biosynthesis; GMP from XMP (L-Gln route): step 1/1. Catalyzes the synthesis of GMP from XMP. The polypeptide is GMP synthase [glutamine-hydrolyzing] (Staphylococcus aureus (strain MSSA476)).